We begin with the raw amino-acid sequence, 151 residues long: Large ribosomal subunit protein bL9 (151 aa).

It belongs to the bacterial ribosomal protein bL9 family.

Binds to the 23S rRNA. This is Large ribosomal subunit protein bL9 from Bordetella avium (strain 197N).